The chain runs to 96 residues: UPF0235 protein Helmi_20270 (96 aa).

This sequence belongs to the UPF0235 family.

The polypeptide is UPF0235 protein Helmi_20270 (Heliobacterium modesticaldum (strain ATCC 51547 / Ice1)).